A 72-amino-acid chain; its full sequence is U-actitoxin-Aeq5b (72 aa).

Positions 1-20 (MNQVMTIFLVLGVIVYSVES) are cleaved as a signal peptide. 4 disulfide bridges follow: C33/C71, C37/C66, C44/C59, and C50/C56.

The protein belongs to the Acrorhagin I family. As to expression, expressed by acrorhagi.

It localises to the secreted. Its subcellular location is the nematocyst. In terms of biological role, toxin that is lethal to crab. It interacts with divalent metal ions (zinc and nickel) suggesting it may function as a metal ion chelator to regulate metal ion levels or as a metal ion transporter, or that its function is modulated by metal ions. Is not active against any of the voltage-gated potassium and sodium channels tested. In addition, it does not show activity in bacterial and fungal growth inhibitory assays as well as in hemolytic assays. The chain is U-actitoxin-Aeq5b from Actinia equina (Beadlet anemone).